A 182-amino-acid polypeptide reads, in one-letter code: Protein Syd (182 aa).

It belongs to the Syd family.

The protein resides in the cell inner membrane. In terms of biological role, interacts with the SecY protein in vivo. May bind preferentially to an uncomplexed state of SecY, thus functioning either as a chelating agent for excess SecY in the cell or as a regulatory factor that negatively controls the translocase function. In Aeromonas salmonicida (strain A449), this protein is Protein Syd.